Reading from the N-terminus, the 119-residue chain is Amicyanin-alpha (119 aa).

The signal sequence occupies residues 1 to 20 (MRALAFAAALAAFSATAALA). Residues 21–119 (AGALEAVQEA…PFMKGKVVVE (99 aa)) form the Plastocyanin-like domain. Histidine 67, cysteine 106, histidine 109, and methionine 112 together coordinate Cu cation.

The cofactor is Cu cation.

It localises to the periplasm. It functions in the pathway one-carbon metabolism; methylamine degradation. Functionally, primary acceptor of electrons from methylamine dehydrogenase. Passes those electrons on either a soluble cytochrome c or to pseudoazurin. In Methylorubrum extorquens (strain ATCC 14718 / DSM 1338 / JCM 2805 / NCIMB 9133 / AM1) (Methylobacterium extorquens), this protein is Amicyanin-alpha (mauC).